Consider the following 230-residue polypeptide: Heptaprenylglyceryl phosphate synthase (230 aa).

Lys12 serves as a coordination point for sn-glycerol 1-phosphate. Residues Asp14 and Thr40 each contribute to the Mg(2+) site. Sn-glycerol 1-phosphate contacts are provided by residues 159 to 164 (YIEYSG), Gly189, and 209 to 210 (GD).

The protein belongs to the GGGP/HepGP synthase family. Group I subfamily. In terms of assembly, homodimer. Mg(2+) serves as cofactor.

It carries out the reaction sn-glycerol 1-phosphate + all-trans-heptaprenyl diphosphate = 3-heptaprenyl-sn-glycero-1-phosphate + diphosphate. It participates in membrane lipid metabolism; glycerophospholipid metabolism. Its function is as follows. Prenyltransferase that catalyzes in vivo the transfer of the heptaprenyl moiety of heptaprenyl pyrophosphate (HepPP; 35 carbon atoms) to the C3 hydroxyl of sn-glycerol-1-phosphate (G1P), producing heptaprenylglyceryl phosphate (HepGP). This reaction is an ether-bond-formation step in the biosynthesis of archaea-type G1P-based membrane lipids found in Bacillales. In Staphylococcus aureus (strain Mu3 / ATCC 700698), this protein is Heptaprenylglyceryl phosphate synthase.